Reading from the N-terminus, the 97-residue chain is Single insulin-like growth factor-binding domain protein-1 (97 aa).

The N-terminal stretch at Met1 to Ala19 is a signal peptide. One can recognise an IGFBP N-terminal domain in the interval Phe20 to Ile96. The O-linked (GalNAc...) threonine glycan is linked to Thr21. Cystine bridges form between Cys22–Cys45, Cys25–Cys47, Cys30–Cys48, Cys36–Cys51, Cys59–Cys75, and Cys69–Cys93.

In terms of tissue distribution, expressed in hemocytes.

It localises to the secreted. Its function is as follows. Has a role in the innate immune system. The sequence is that of Single insulin-like growth factor-binding domain protein-1 from Cupiennius salei (American wandering spider).